The sequence spans 778 residues: pH-response regulator protein palH/prr-4 (778 aa).

The Extracellular segment spans residues 1 to 108; the sequence is MEPRQLFSDP…DPFYASTFPQ (108 aa). Residues 109–129 traverse the membrane as a helical segment; that stretch reads CYALAATTIIAYTLVIMLFIT. At 130 to 160 the chain is on the periplasmic side; that stretch reads PRSFLDGGVVVLGRKGFTNGGGGTSIGGRPW. Residues 161–181 traverse the membrane as a helical segment; it reads LQKVAALSVAISLTIANAATF. The Extracellular segment spans residues 182 to 201; it reads RAAEQQYSWGVQNAKQLQED. A helical transmembrane segment spans residues 202–222; it reads VLGGAELKIIRIISDTFLWLA. Over 223–237 the chain is Periplasmic; the sequence is QAQTLIRLFPRQREK. A helical transmembrane segment spans residues 238–258; the sequence is VIIKWTAFALITLDVIFQSLN. The Extracellular portion of the chain corresponds to 259–275; the sequence is SFKYGGSDLTRPKFTEA. Residues 276–296 form a helical membrane-spanning segment; it reads VPALSYLFALALGVLYAAWVL. The Periplasmic portion of the chain corresponds to 297–314; it reads YYSIMKKRYAFYHPLMKN. The helical transmembrane segment at 315 to 335 threads the bilayer; that stretch reads MILVAVLSVVSILVPVVFFIL. The Extracellular segment spans residues 336–341; sequence DISKPD. A helical transmembrane segment spans residues 342–362; it reads FAGWGDYVRWVGAAAASVIVW. The Periplasmic segment spans residues 363 to 778; it reads EWVERIEALE…RSDSSTTPSP (416 aa). 3 disordered regions span residues 394–499, 514–605, and 660–778; these read ASQS…DTTS, ELTS…DENS, and ELNH…TPSP. Basic and acidic residues predominate over residues 446–456; it reads HRTEPSSRNEP. The span at 457 to 466 shows a compositional bias: polar residues; sequence NEGSSPVAET. Composition is skewed to basic and acidic residues over residues 588–605 and 661–675; these read FVTRSEPRSSKMQRDENS and LNHSSREGTVREESR. Polar residues predominate over residues 720–732; sequence PIVTQGSFTNNRY. Positions 749–759 are enriched in low complexity; sequence ARAPSQPQSPS. The segment covering 769–778 has biased composition (polar residues); sequence RSDSSTTPSP.

The protein belongs to the palH/RIM21 family.

The protein resides in the cell membrane. Functionally, required for the proteolytic cleavage of the transcription factor pacc-1 in response to alkaline ambient pH. The sequence is that of pH-response regulator protein palH/prr-4 (prr-4) from Neurospora crassa (strain ATCC 24698 / 74-OR23-1A / CBS 708.71 / DSM 1257 / FGSC 987).